Reading from the N-terminus, the 355-residue chain is MSELKNDRYLRALLKQPVDCTPVWMMRQAGRYLPEYRATRSVAGDFMSLCKNAELASEVTLQPLRRFPLDAAILFSDILTIPDAMGLGLYFEAGEGPKFERPITCKADVDKIGLPDPEGELQYVMNAVRQIRKDLQGEVPLIGFSGSPWTLATYMVEGGSSKAFTKIKKMMYAEPATLHLLLDKLADSVVEYLNAQIKAGAQSVMVFDTWGGVLTPSDYNEFSLRYMHKIVDGLIRENDGHRVPVTLFTKNGGMWLEQIAATGCDAIGLDWTINIADANRRVGDKVALQGNMDPSILYAQPERIRQEVATILEGYGDEGTGHVFNLGHGIHLDVPPENAGVFVDAVHELSKPYHK.

Substrate-binding positions include 27–31 (RQAGR), Asp77, Tyr154, Thr209, and His328.

The protein belongs to the uroporphyrinogen decarboxylase family. In terms of assembly, homodimer.

It localises to the cytoplasm. The catalysed reaction is uroporphyrinogen III + 4 H(+) = coproporphyrinogen III + 4 CO2. Its pathway is porphyrin-containing compound metabolism; protoporphyrin-IX biosynthesis; coproporphyrinogen-III from 5-aminolevulinate: step 4/4. Catalyzes the decarboxylation of four acetate groups of uroporphyrinogen-III to yield coproporphyrinogen-III. The protein is Uroporphyrinogen decarboxylase of Photobacterium profundum (strain SS9).